We begin with the raw amino-acid sequence, 316 residues long: tRNA dimethylallyltransferase (316 aa).

17 to 24 (GPTASGKT) serves as a coordination point for ATP. 19 to 24 (TASGKT) is a substrate binding site. 4 interaction with substrate tRNA regions span residues 42 to 45 (DSAL), 166 to 170 (QRLSR), 247 to 252 (RCVGYR), and 280 to 287 (KRQITWLR).

The protein belongs to the IPP transferase family. Monomer. It depends on Mg(2+) as a cofactor.

It carries out the reaction adenosine(37) in tRNA + dimethylallyl diphosphate = N(6)-dimethylallyladenosine(37) in tRNA + diphosphate. Catalyzes the transfer of a dimethylallyl group onto the adenine at position 37 in tRNAs that read codons beginning with uridine, leading to the formation of N6-(dimethylallyl)adenosine (i(6)A). This Escherichia fergusonii (strain ATCC 35469 / DSM 13698 / CCUG 18766 / IAM 14443 / JCM 21226 / LMG 7866 / NBRC 102419 / NCTC 12128 / CDC 0568-73) protein is tRNA dimethylallyltransferase.